Reading from the N-terminus, the 553-residue chain is Probable malate:quinone oxidoreductase (553 aa).

Residues 534-543 show a composition bias toward low complexity; that stretch reads QLKPQVQPQP. Residues 534–553 are disordered; that stretch reads QLKPQVQPQPAHKAVADIAL.

Belongs to the MQO family. It depends on FAD as a cofactor.

The catalysed reaction is (S)-malate + a quinone = a quinol + oxaloacetate. Its pathway is carbohydrate metabolism; tricarboxylic acid cycle; oxaloacetate from (S)-malate (quinone route): step 1/1. The sequence is that of Probable malate:quinone oxidoreductase from Citrobacter koseri (strain ATCC BAA-895 / CDC 4225-83 / SGSC4696).